Consider the following 227-residue polypeptide: Ras-related protein Rab-3C (227 aa).

9 residues coordinate GTP: Ser-39, Gly-42, Lys-43, Thr-44, Ser-45, Thr-56, Ser-57, Ser-61, and Thr-62. Mg(2+) is bound at residue Thr-44. A Switch 1 motif is present at residues Asp-53 to Asp-66. Residues Thr-62 and Asp-85 each coordinate Mg(2+). Position 86 is a phosphothreonine; by LRRK2 (Thr-86). Residues Thr-86 to Met-104 carry the Switch 2 motif. 6 residues coordinate GTP: Gly-88, Asn-143, Lys-144, Asp-146, Ala-174, and Lys-175. Phosphoserine occurs at positions 196 and 198. The tract at residues Asp-202–Cys-227 is disordered. Thr-206 bears the Phosphothreonine mark. Residues Thr-217–Cys-227 are compositionally biased toward pro residues. Residues Cys-225 and Cys-227 are each lipidated (S-geranylgeranyl cysteine). Cysteine methyl ester is present on Cys-227.

The protein belongs to the small GTPase superfamily. Rab family. As to quaternary structure, interacts with RIMS1, RIMS2, RPH3A and RPH3AL. Interacts with GDI2, CHM and CHML; phosphorylation at Thr-86 disrupts these interactions. Interacts with MADD (via uDENN domain); the GTP-bound form is preferred for interaction. The cofactor is Mg(2+). Phosphorylation of Thr-86 in the switch II region by LRRK2 prevents the association of RAB regulatory proteins, including CHM, CHML and RAB GDP dissociation inhibitor GDI2.

Its subcellular location is the cell membrane. It carries out the reaction GTP + H2O = GDP + phosphate + H(+). With respect to regulation, regulated by guanine nucleotide exchange factors (GEFs) which promote the exchange of bound GDP for free GTP. Regulated by GTPase activating proteins (GAPs) which increase the GTP hydrolysis activity. Inhibited by GDP dissociation inhibitors (GDIs) which prevent Rab-GDP dissociation. The small GTPases Rab are key regulators of intracellular membrane trafficking, from the formation of transport vesicles to their fusion with membranes. Rabs cycle between an inactive GDP-bound form and an active GTP-bound form that is able to recruit to membranes different sets of downstream effectors directly responsible for vesicle formation, movement, tethering and fusion. This chain is Ras-related protein Rab-3C, found in Mus musculus (Mouse).